A 109-amino-acid chain; its full sequence is CRISPR-associated endoribonuclease Cas2 (109 aa).

Asp8 is a Mg(2+) binding site.

It belongs to the CRISPR-associated endoribonuclease Cas2 protein family. In terms of assembly, homodimer, forms a heterotetramer with a Cas1 homodimer. Mg(2+) serves as cofactor.

Its function is as follows. CRISPR (clustered regularly interspaced short palindromic repeat), is an adaptive immune system that provides protection against mobile genetic elements (viruses, transposable elements and conjugative plasmids). CRISPR clusters contain sequences complementary to antecedent mobile elements and target invading nucleic acids. CRISPR clusters are transcribed and processed into CRISPR RNA (crRNA). Functions as a ssRNA-specific endoribonuclease. Involved in the integration of spacer DNA into the CRISPR cassette. The sequence is that of CRISPR-associated endoribonuclease Cas2 from Streptococcus mutans serotype c (strain ATCC 700610 / UA159).